Here is a 115-residue protein sequence, read N- to C-terminus: Ribonuclease P protein component (115 aa).

Belongs to the RnpA family. As to quaternary structure, consists of a catalytic RNA component (M1 or rnpB) and a protein subunit.

The enzyme catalyses Endonucleolytic cleavage of RNA, removing 5'-extranucleotides from tRNA precursor.. Its function is as follows. RNaseP catalyzes the removal of the 5'-leader sequence from pre-tRNA to produce the mature 5'-terminus. It can also cleave other RNA substrates such as 4.5S RNA. The protein component plays an auxiliary but essential role in vivo by binding to the 5'-leader sequence and broadening the substrate specificity of the ribozyme. This chain is Ribonuclease P protein component, found in Staphylococcus aureus (strain Mu3 / ATCC 700698).